The primary structure comprises 334 residues: Phosphate acyltransferase (334 aa).

Belongs to the PlsX family. In terms of assembly, homodimer. Probably interacts with PlsY.

The protein localises to the cytoplasm. The enzyme catalyses a fatty acyl-[ACP] + phosphate = an acyl phosphate + holo-[ACP]. The protein operates within lipid metabolism; phospholipid metabolism. In terms of biological role, catalyzes the reversible formation of acyl-phosphate (acyl-PO(4)) from acyl-[acyl-carrier-protein] (acyl-ACP). This enzyme utilizes acyl-ACP as fatty acyl donor, but not acyl-CoA. The chain is Phosphate acyltransferase from Streptococcus thermophilus (strain ATCC BAA-491 / LMD-9).